The chain runs to 257 residues: Snake venom serine protease BITS01A (257 aa).

The first 18 residues, 1–18 (MVLIRVIANLLILQVSYA), serve as a signal peptide directing secretion. A propeptide spanning residues 19-24 (QKSSEL) is cleaved from the precursor. Positions 25–248 (VVGGDECDIN…YLPWIQSIIA (224 aa)) constitute a Peptidase S1 domain. 6 disulfides stabilise this stretch: cysteine 31–cysteine 162, cysteine 49–cysteine 65, cysteine 97–cysteine 255, cysteine 141–cysteine 209, cysteine 173–cysteine 188, and cysteine 199–cysteine 224. The Charge relay system role is filled by histidine 64. An N-linked (GlcNAc...) asparagine glycan is attached at asparagine 101. The active-site Charge relay system is aspartate 109. Residues asparagine 121, asparagine 153, and asparagine 169 are each glycosylated (N-linked (GlcNAc...) asparagine). Serine 203 acts as the Charge relay system in catalysis. N-linked (GlcNAc...) asparagine glycans are attached at residues asparagine 210 and asparagine 250.

It belongs to the peptidase S1 family. Snake venom subfamily. Monomer. As to expression, expressed by the venom gland.

The protein localises to the secreted. In terms of biological role, snake venom serine protease that may act in the hemostasis system of the prey. The polypeptide is Snake venom serine protease BITS01A (Bothrops insularis (Golden lancehead)).